Consider the following 145-residue polypeptide: D-aminoacyl-tRNA deacylase (145 aa).

The short motif at 137-138 is the Gly-cisPro motif, important for rejection of L-amino acids element; the sequence is GP.

The protein belongs to the DTD family. Homodimer.

It localises to the cytoplasm. It carries out the reaction glycyl-tRNA(Ala) + H2O = tRNA(Ala) + glycine + H(+). The catalysed reaction is a D-aminoacyl-tRNA + H2O = a tRNA + a D-alpha-amino acid + H(+). Functionally, an aminoacyl-tRNA editing enzyme that deacylates mischarged D-aminoacyl-tRNAs. Also deacylates mischarged glycyl-tRNA(Ala), protecting cells against glycine mischarging by AlaRS. Acts via tRNA-based rather than protein-based catalysis; rejects L-amino acids rather than detecting D-amino acids in the active site. By recycling D-aminoacyl-tRNA to D-amino acids and free tRNA molecules, this enzyme counteracts the toxicity associated with the formation of D-aminoacyl-tRNA entities in vivo and helps enforce protein L-homochirality. The sequence is that of D-aminoacyl-tRNA deacylase from Pectobacterium atrosepticum (strain SCRI 1043 / ATCC BAA-672) (Erwinia carotovora subsp. atroseptica).